The primary structure comprises 134 residues: UPF0299 membrane protein KPK_1586 (134 aa).

4 helical membrane-spanning segments follow: residues 5–25 (LTIIWQYLRAFVLIYACLYAG), 26–46 (IFIAGLLPITIPGSIIGMLIL), 66–86 (ILIRYMALLFVPIGVGVMQYW), and 93–113 (LGPVVISCAISTLVVFVVVSW).

It belongs to the UPF0299 family.

It is found in the cell inner membrane. In Klebsiella pneumoniae (strain 342), this protein is UPF0299 membrane protein KPK_1586.